The primary structure comprises 81 residues: Weak neurotoxin OH-72 (81 aa).

The first 16 residues, 1 to 16 (LTLVVVTIVCLDLGYT), serve as a signal peptide directing secretion. 5 disulfide bridges follow: cysteine 19–cysteine 40, cysteine 22–cysteine 27, cysteine 33–cysteine 58, cysteine 62–cysteine 73, and cysteine 74–cysteine 79.

Belongs to the three-finger toxin family. Ancestral subfamily. Orphan group II sub-subfamily. Expressed by the venom gland.

The protein resides in the secreted. Its function is as follows. Binds with low affinity to muscular (alpha-1-beta-1-delta-epsilon/CHRNA1-CHRNB1-CHRND-CHRNE) and very low affinity to neuronal (alpha-7/CHRNA7) nicotinic acetylcholine receptor (nAChR). The sequence is that of Weak neurotoxin OH-72 from Ophiophagus hannah (King cobra).